Here is a 469-residue protein sequence, read N- to C-terminus: ATP synthase subunit beta (469 aa).

156–163 (GGAGVGKT) contributes to the ATP binding site.

It belongs to the ATPase alpha/beta chains family. As to quaternary structure, F-type ATPases have 2 components, CF(1) - the catalytic core - and CF(0) - the membrane proton channel. CF(1) has five subunits: alpha(3), beta(3), gamma(1), delta(1), epsilon(1). CF(0) has three main subunits: a(1), b(2) and c(9-12). The alpha and beta chains form an alternating ring which encloses part of the gamma chain. CF(1) is attached to CF(0) by a central stalk formed by the gamma and epsilon chains, while a peripheral stalk is formed by the delta and b chains.

It localises to the cell membrane. It carries out the reaction ATP + H2O + 4 H(+)(in) = ADP + phosphate + 5 H(+)(out). Produces ATP from ADP in the presence of a proton gradient across the membrane. The catalytic sites are hosted primarily by the beta subunits. The sequence is that of ATP synthase subunit beta from Bacillus anthracis (strain CDC 684 / NRRL 3495).